Consider the following 392-residue polypeptide: Formate-dependent phosphoribosylglycinamide formyltransferase (392 aa).

N(1)-(5-phospho-beta-D-ribosyl)glycinamide-binding positions include 22-23 and Glu-82; that span reads EL. ATP contacts are provided by residues Arg-114, Lys-155, 160–165, 195–198, and Glu-203; these read SSGKGQ and EGVV. The ATP-grasp domain maps to 119–308; the sequence is RLAAEELWVP…EFALHVRAFL (190 aa). Mg(2+) is bound by residues Glu-267 and Glu-279. N(1)-(5-phospho-beta-D-ribosyl)glycinamide-binding positions include Asp-286, Lys-355, and 362 to 363; that span reads RR.

It belongs to the PurK/PurT family. Homodimer.

It carries out the reaction N(1)-(5-phospho-beta-D-ribosyl)glycinamide + formate + ATP = N(2)-formyl-N(1)-(5-phospho-beta-D-ribosyl)glycinamide + ADP + phosphate + H(+). It participates in purine metabolism; IMP biosynthesis via de novo pathway; N(2)-formyl-N(1)-(5-phospho-D-ribosyl)glycinamide from N(1)-(5-phospho-D-ribosyl)glycinamide (formate route): step 1/1. Its function is as follows. Involved in the de novo purine biosynthesis. Catalyzes the transfer of formate to 5-phospho-ribosyl-glycinamide (GAR), producing 5-phospho-ribosyl-N-formylglycinamide (FGAR). Formate is provided by PurU via hydrolysis of 10-formyl-tetrahydrofolate. The polypeptide is Formate-dependent phosphoribosylglycinamide formyltransferase (Erwinia tasmaniensis (strain DSM 17950 / CFBP 7177 / CIP 109463 / NCPPB 4357 / Et1/99)).